The primary structure comprises 312 residues: F-box protein At1g11270 (312 aa).

The region spanning 29–80 (SVVKLLLPHDVVGLILERLPVESLLRFKCVSNQWKSTIESQCFQERQLIRRM) is the F-box domain.

The polypeptide is F-box protein At1g11270 (Arabidopsis thaliana (Mouse-ear cress)).